Consider the following 172-residue polypeptide: Large ribosomal subunit protein uL10 (172 aa).

The protein belongs to the universal ribosomal protein uL10 family. Part of the ribosomal stalk of the 50S ribosomal subunit. The N-terminus interacts with L11 and the large rRNA to form the base of the stalk. The C-terminus forms an elongated spine to which L12 dimers bind in a sequential fashion forming a multimeric L10(L12)X complex.

Forms part of the ribosomal stalk, playing a central role in the interaction of the ribosome with GTP-bound translation factors. The chain is Large ribosomal subunit protein uL10 from Mesorhizobium japonicum (strain LMG 29417 / CECT 9101 / MAFF 303099) (Mesorhizobium loti (strain MAFF 303099)).